Reading from the N-terminus, the 551-residue chain is Protein GZF3 (551 aa).

The tract at residues 17–43 (DNVFEPKSSENLNSLNQSEEEGHIGRW) is disordered. The GATA-type zinc-finger motif lies at 131 to 155 (CKNCLTSTTPLWRRDEHGAMLCNAC). Disordered stretches follow at residues 212-260 (GRKA…SATK), 379-400 (LAPTSSRTTDSNPSEVPNQIRS), and 467-490 (SISNSVSSSDVSGRKFENHPAKDL). The segment covering 228 to 239 (SQLLMGTSSTAK) has biased composition (polar residues). Basic and acidic residues predominate over residues 244 to 254 (PKTESKERSDS). Residues 388–400 (DSNPSEVPNQIRS) are compositionally biased toward polar residues. A compositionally biased stretch (low complexity) spans 467–477 (SISNSVSSSDV). Positions 478 to 490 (SGRKFENHPAKDL) are enriched in basic and acidic residues.

It localises to the nucleus. The chain is Protein GZF3 (GZF3) from Saccharomyces cerevisiae (strain ATCC 204508 / S288c) (Baker's yeast).